We begin with the raw amino-acid sequence, 387 residues long: Gamma-butyrobetaine dioxygenase (387 aa).

Cysteine 38, cysteine 40, cysteine 43, and histidine 82 together coordinate Zn(2+). Residues histidine 202, aspartate 204, and histidine 347 each contribute to the Fe cation site. Serine 351 carries the phosphoserine modification.

Belongs to the gamma-BBH/TMLD family. Requires Fe(2+) as cofactor. L-ascorbate is required as a cofactor.

Its subcellular location is the cytoplasm. It carries out the reaction 4-(trimethylamino)butanoate + 2-oxoglutarate + O2 = carnitine + succinate + CO2. Its pathway is amine and polyamine biosynthesis; carnitine biosynthesis. Its function is as follows. Catalyzes the formation of L-carnitine from gamma-butyrobetaine. This chain is Gamma-butyrobetaine dioxygenase (BBOX1), found in Pongo abelii (Sumatran orangutan).